We begin with the raw amino-acid sequence, 188 residues long: Elongation factor P (188 aa).

It belongs to the elongation factor P family.

It is found in the cytoplasm. It functions in the pathway protein biosynthesis; polypeptide chain elongation. In terms of biological role, involved in peptide bond synthesis. Stimulates efficient translation and peptide-bond synthesis on native or reconstituted 70S ribosomes in vitro. Probably functions indirectly by altering the affinity of the ribosome for aminoacyl-tRNA, thus increasing their reactivity as acceptors for peptidyl transferase. The chain is Elongation factor P from Cellvibrio japonicus (strain Ueda107) (Pseudomonas fluorescens subsp. cellulosa).